An 85-amino-acid chain; its full sequence is Translation initiation factor IF-1 1 (85 aa).

Residues 1-72 form the S1-like domain; sequence MAKEELIEMS…SKGRITFRHL (72 aa).

The protein belongs to the IF-1 family. In terms of assembly, component of the 30S ribosomal translation pre-initiation complex which assembles on the 30S ribosome in the order IF-2 and IF-3, IF-1 and N-formylmethionyl-tRNA(fMet); mRNA recruitment can occur at any time during PIC assembly.

It localises to the cytoplasm. One of the essential components for the initiation of protein synthesis. Stabilizes the binding of IF-2 and IF-3 on the 30S subunit to which N-formylmethionyl-tRNA(fMet) subsequently binds. Helps modulate mRNA selection, yielding the 30S pre-initiation complex (PIC). Upon addition of the 50S ribosomal subunit IF-1, IF-2 and IF-3 are released leaving the mature 70S translation initiation complex. This is Translation initiation factor IF-1 1 from Aromatoleum aromaticum (strain DSM 19018 / LMG 30748 / EbN1) (Azoarcus sp. (strain EbN1)).